Reading from the N-terminus, the 107-residue chain is Holo-[acyl-carrier-protein] synthase (107 aa).

Residues Asp-10 and Glu-54 each contribute to the Mg(2+) site.

It belongs to the P-Pant transferase superfamily. AcpS family. Mg(2+) is required as a cofactor.

The protein resides in the cytoplasm. The enzyme catalyses apo-[ACP] + CoA = holo-[ACP] + adenosine 3',5'-bisphosphate + H(+). Transfers the 4'-phosphopantetheine moiety from coenzyme A to a Ser of acyl-carrier-protein. This is Holo-[acyl-carrier-protein] synthase from Mycoplasma mobile (strain ATCC 43663 / 163K / NCTC 11711) (Mesomycoplasma mobile).